We begin with the raw amino-acid sequence, 276 residues long: tRNA dimethylallyltransferase (276 aa).

The interaction with substrate tRNA stretch occupies residues Asp9–Ser12.

It belongs to the IPP transferase family. Monomer. It depends on Mg(2+) as a cofactor.

The catalysed reaction is adenosine(37) in tRNA + dimethylallyl diphosphate = N(6)-dimethylallyladenosine(37) in tRNA + diphosphate. Its function is as follows. Catalyzes the transfer of a dimethylallyl group onto the adenine at position 37 in tRNAs that read codons beginning with uridine, leading to the formation of N6-(dimethylallyl)adenosine (i(6)A). The polypeptide is tRNA dimethylallyltransferase (miaA) (Helicobacter pylori (strain G27)).